The following is a 369-amino-acid chain: N-methyltransferase imqF (369 aa).

This sequence belongs to the methyltransferase superfamily.

It participates in secondary metabolite biosynthesis. Functionally, N-methyltransferase; part of the gene cluster that mediates the biosynthesis of imizoquins A to D, tripeptide-derived alkaloids that serve a protective role against oxidative stress that are essential for normal germination. ImqB is a canonical three-module NRPS that assembles the tripeptide backbone of the imizoquins via condensation of Trp, Tyr, and Leu-derived precursors. N-methylation by imqF and phenol oxidation by imqC, followed by cyclization via the FAD-dependent oxidase imqH carry out the three-step transformation of L-tyrosine into tetrahydroisoquinoline. Importantly, this sequence requires the presence of a free amine in the tyrosine moiety, indicating that isoquinoline formation occurs prior to peptide bond formation. The imidazolidin-4-one ring of imizoquins could form following additional oxidation of the methyl-derived bridgehead carbon by imqH. Lastly, O-methylation by imqG and leucine hydroxylation by imqE complete biosynthesis of the imizoquins. In Aspergillus flavus (strain ATCC 200026 / FGSC A1120 / IAM 13836 / NRRL 3357 / JCM 12722 / SRRC 167), this protein is N-methyltransferase imqF.